The sequence spans 504 residues: Anaerobic nitric oxide reductase transcription regulator NorR (504 aa).

At aspartate 57 the chain carries 4-aspartylphosphate. One can recognise a Sigma-54 factor interaction domain in the interval 187-416; it reads MIGLSPGMTQ…LEHAIHRAVV (230 aa). ATP is bound by residues 215 to 222 and 278 to 287; these read GETGTGKE and ADNGTLFLDE. Positions 479–498 form a DNA-binding region, H-T-H motif; it reads WAACARMLETDVANLHRLAK.

It functions in the pathway nitrogen metabolism; nitric oxide reduction. In terms of biological role, required for the expression of anaerobic nitric oxide (NO) reductase, acts as a transcriptional activator for at least the norVW operon. Activation also requires sigma-54. The polypeptide is Anaerobic nitric oxide reductase transcription regulator NorR (Escherichia coli O45:K1 (strain S88 / ExPEC)).